The chain runs to 540 residues: Putative sel1-like repeat-containing protein R815 (540 aa).

6 Sel1-like repeats span residues 129–164 (IDAQTNYGLVNEYGIGVKKNIKKAIKWYKLSCYKEN), 165–200 (LFGLLFLGSLYERGYGVSCDKHMAFNLYEKATKHNY), 201–236 (PAVKRQLAFMYRTGSGTTKNINKSHELYREAANQGY), 237–272 (PLAQYALALQCKYGHGCIKNYKEAETWLIRSYNNGC), 273–308 (LYATYSLARLYIETKSPLRNYSRAFELMQEAASENY), and 309–344 (LLAINYLAKIYKNGIGVNKNISRAIYWYYKAGNSTK).

The polypeptide is Putative sel1-like repeat-containing protein R815 (Acanthamoeba polyphaga (Amoeba)).